Here is a 196-residue protein sequence, read N- to C-terminus: Putative archaetidylserine decarboxylase proenzyme (196 aa).

Ser164 acts as the Schiff-base intermediate with substrate; via pyruvic acid in catalysis. Ser164 is modified (pyruvic acid (Ser); by autocatalysis).

Belongs to the phosphatidylserine decarboxylase family. PSD-A subfamily. In terms of assembly, heterodimer of a large membrane-associated beta subunit and a small pyruvoyl-containing alpha subunit. Requires pyruvate as cofactor. Is synthesized initially as an inactive proenzyme. Formation of the active enzyme involves a self-maturation process in which the active site pyruvoyl group is generated from an internal serine residue via an autocatalytic post-translational modification. Two non-identical subunits are generated from the proenzyme in this reaction, and the pyruvate is formed at the N-terminus of the alpha chain, which is derived from the carboxyl end of the proenzyme. The post-translation cleavage follows an unusual pathway, termed non-hydrolytic serinolysis, in which the side chain hydroxyl group of the serine supplies its oxygen atom to form the C-terminus of the beta chain, while the remainder of the serine residue undergoes an oxidative deamination to produce ammonia and the pyruvoyl prosthetic group on the alpha chain.

The protein localises to the cell membrane. It carries out the reaction archaetidylserine + H(+) = archaetidylethanolamine + CO2. Functionally, catalyzes the formation of archaetidylethanolamine (PtdEtn) from archaetidylserine (PtdSer). The sequence is that of Putative archaetidylserine decarboxylase proenzyme from Halobacterium salinarum (strain ATCC 700922 / JCM 11081 / NRC-1) (Halobacterium halobium).